The following is a 486-amino-acid chain: UDP-N-acetylmuramate--L-alanine ligase (486 aa).

129–135 (GTHGKTT) lines the ATP pocket.

It belongs to the MurCDEF family.

The protein resides in the cytoplasm. It carries out the reaction UDP-N-acetyl-alpha-D-muramate + L-alanine + ATP = UDP-N-acetyl-alpha-D-muramoyl-L-alanine + ADP + phosphate + H(+). It participates in cell wall biogenesis; peptidoglycan biosynthesis. In terms of biological role, cell wall formation. This Vibrio cholerae serotype O1 (strain ATCC 39315 / El Tor Inaba N16961) protein is UDP-N-acetylmuramate--L-alanine ligase.